The primary structure comprises 309 residues: Ribosomal RNA small subunit methyltransferase H (309 aa).

S-adenosyl-L-methionine-binding positions include Gly-36–His-38, Asp-56, Phe-82, Asp-103, and Gln-110.

It belongs to the methyltransferase superfamily. RsmH family.

The protein resides in the cytoplasm. It catalyses the reaction cytidine(1402) in 16S rRNA + S-adenosyl-L-methionine = N(4)-methylcytidine(1402) in 16S rRNA + S-adenosyl-L-homocysteine + H(+). In terms of biological role, specifically methylates the N4 position of cytidine in position 1402 (C1402) of 16S rRNA. The chain is Ribosomal RNA small subunit methyltransferase H from Hahella chejuensis (strain KCTC 2396).